A 211-amino-acid chain; its full sequence is Thymidylate kinase (211 aa).

10–17 (GPDGAGKT) is an ATP binding site.

It belongs to the thymidylate kinase family.

The catalysed reaction is dTMP + ATP = dTDP + ADP. In terms of biological role, phosphorylation of dTMP to form dTDP in both de novo and salvage pathways of dTTP synthesis. The polypeptide is Thymidylate kinase (Lactococcus lactis subsp. cremoris (strain MG1363)).